The sequence spans 490 residues: MAVSSDAEQKFDRVKTQLKARLGAEVYSSWFGRMKVAEASKGIVRISVPTAFLRSWINGHYLDLISELWKQEDADLLKIEIVVRTATRQGRSHAEPELAPARKMTRQTQTALAAGTVSPGRVERPPVPRPGAAVESEFRHNVLGSPLDPRYTFGSFIEGPSNRVAFAAAKAVAESQSSAVRFNPLFLHATVGLGKTHLLQAIAAESLKQNPKSRVVYLTAEYFMWRFATAIRDNNALTLKEQLRDIDLLIIDDMQFLQGKSIQHEFCHLINMLLDSAKQVVVAADRPPSELESLEPRVRSRLNGGVALEMSAPDFAMRLGMLKLRLATARIDDASLDISDEILNHVARTVTGSGRELEGAFNQLLFRQSFEPQITIDRIDEILGHIYRTGEPKRVRIEDIQRIVARHYNVSKTELLSNRRTRTIVKPRQVAMYLSKVMTPRSLPEIGRRFGGRDHTTVLHAVRKIEDLSGNDNTLAQELELLRRLINDQA.

The interval 1 to 75 is domain I, interacts with DnaA modulators; the sequence is MAVSSDAEQK…SELWKQEDAD (75 aa). Positions 75–145 are domain II; it reads DLLKIEIVVR…SEFRHNVLGS (71 aa). The interval 146 to 368 is domain III, AAA+ region; sequence PLDPRYTFGS…GAFNQLLFRQ (223 aa). Residues Gly192, Gly194, Lys195, and Thr196 each contribute to the ATP site. Residues 369-490 are domain IV, binds dsDNA; that stretch reads SFEPQITIDR…LLRRLINDQA (122 aa).

It belongs to the DnaA family. As to quaternary structure, oligomerizes as a right-handed, spiral filament on DNA at oriC.

The protein localises to the cytoplasm. Functionally, plays an essential role in the initiation and regulation of chromosomal replication. ATP-DnaA binds to the origin of replication (oriC) to initiate formation of the DNA replication initiation complex once per cell cycle. Binds the DnaA box (a 9 base pair repeat at the origin) and separates the double-stranded (ds)DNA. Forms a right-handed helical filament on oriC DNA; dsDNA binds to the exterior of the filament while single-stranded (ss)DNA is stabiized in the filament's interior. The ATP-DnaA-oriC complex binds and stabilizes one strand of the AT-rich DNA unwinding element (DUE), permitting loading of DNA polymerase. After initiation quickly degrades to an ADP-DnaA complex that is not apt for DNA replication. Binds acidic phospholipids. This is Chromosomal replication initiator protein DnaA from Mesorhizobium japonicum (strain LMG 29417 / CECT 9101 / MAFF 303099) (Mesorhizobium loti (strain MAFF 303099)).